A 227-amino-acid polypeptide reads, in one-letter code: 27 kDa A-type inclusion protein (227 aa).

Residues 4–210 (MPKQREMRRL…AECRRGNNGS (207 aa)) are a coiled coil.

The sequence is that of 27 kDa A-type inclusion protein from Bos taurus (Bovine).